A 132-amino-acid polypeptide reads, in one-letter code: Ribosome-binding factor A (132 aa).

Belongs to the RbfA family. Monomer. Binds 30S ribosomal subunits, but not 50S ribosomal subunits or 70S ribosomes.

Its subcellular location is the cytoplasm. In terms of biological role, one of several proteins that assist in the late maturation steps of the functional core of the 30S ribosomal subunit. Associates with free 30S ribosomal subunits (but not with 30S subunits that are part of 70S ribosomes or polysomes). Required for efficient processing of 16S rRNA. May interact with the 5'-terminal helix region of 16S rRNA. This chain is Ribosome-binding factor A, found in Treponema denticola (strain ATCC 35405 / DSM 14222 / CIP 103919 / JCM 8153 / KCTC 15104).